The following is a 142-amino-acid chain: Hemoglobin subunit alpha (142 aa).

Positions 2-142 (KLSAEDKHNV…VGHVLTSKYR (141 aa)) constitute a Globin domain. Histidine 59 serves as a coordination point for O2. Histidine 88 is a heme b binding site.

Belongs to the globin family. As to quaternary structure, heterotetramer of two alpha chains and two beta chains. As to expression, red blood cells.

Involved in oxygen transport from the lung to the various peripheral tissues. This Taricha granulosa (Roughskin newt) protein is Hemoglobin subunit alpha (HBA).